Here is a 322-residue protein sequence, read N- to C-terminus: MSKAQYALVGDIGGTNARFALVARDSFELEHIQVLPCNDYANLDEAVRDYLAHHPEAEVHEACMAFACPVHGDTIKMTNNHWTFNKADMQARLGFDTFKYVNDFTAMALGTLHVADERLQKVGGGEGKDGAARLVIGPGTGLGVSGLVRTMTDWAPLSTEGGHVDFAPTDEVEISVLRILKERFGRVSVERILCGEGLLNLYRSLCEIDGVEPAHTQPSQVTEAALANSDVIAHKTLKLFCAIFGRVTGNAALTLGALGGVYVCGGIIPRFIEFFRDSDFRQCFEDKGRMRDYLGGIPVYVVTETYTGLLGAAEALKNQEVH.

An ATP-binding site is contributed by 10 to 15 (GDIGGT).

It belongs to the bacterial glucokinase family.

It localises to the cytoplasm. It catalyses the reaction D-glucose + ATP = D-glucose 6-phosphate + ADP + H(+). In Hahella chejuensis (strain KCTC 2396), this protein is Glucokinase.